Reading from the N-terminus, the 124-residue chain is uncharacterized protein (124 aa).

Its subcellular location is the plastid. The protein resides in the chloroplast. This is an uncharacterized protein from Chlamydomonas reinhardtii (Chlamydomonas smithii).